The following is a 586-amino-acid chain: Chaperonin 60 subunit alpha 1, chloroplastic (586 aa).

Residues 1 to 46 constitute a chloroplast transit peptide; the sequence is MASANALSSASVLCSSRQSKLGGGNQQQGQRVSYNKRTIRRFSVRA. Ser90 bears the Phosphoserine mark.

It belongs to the chaperonin (HSP60) family. As to quaternary structure, part of the Cpn60 complex composed of 7 alpha and 7 beta subunits. This complex shows ATPase activity. The Cpn60 complex interacts with the Cpn10 complex. Expressed in leaves, stems, siliques and flowers.

It is found in the plastid. The protein localises to the chloroplast. In terms of biological role, binds RuBisCO small and large subunits and is implicated in the assembly of the enzyme oligomer. Involved in protein assisted folding. Required for proper chloroplast development. This chain is Chaperonin 60 subunit alpha 1, chloroplastic (CPN60A1), found in Arabidopsis thaliana (Mouse-ear cress).